Here is an 852-residue protein sequence, read N- to C-terminus: Disrupted in schizophrenia 1 homolog (852 aa).

Disordered stretches follow at residues 1-86 (MQGG…GLDP), 236-264 (EAEPLHQRPQEMAAEASSSDRPHGDPRHL), and 280-320 (QVTR…QGGG). Residues 1–294 (MQGGGPRGAP…SSRQSECGTV (294 aa)) form an interaction with MAP1A region. The span at 65 to 79 (AGLTGQQSQHSQSKA) shows a compositional bias: polar residues. A compositionally biased stretch (basic and acidic residues) spans 253–263 (SSDRPHGDPRH). Residues 288-311 (QSECGTVSSSSSDTGFSSQDASSA) are compositionally biased toward low complexity. The segment at 295-693 (SSSSSDTGFS…LGRVWKADLE (399 aa)) is interaction with TRAF3IP1. Coiled coils occupy residues 367–397 (EDGDYDTAETLRQRLEELEQEKGRLSWALPS) and 449–496 (ITRR…LLRW). Residues 437–594 (LRTTAQDSLP…LLEAKMLALS (158 aa)) form a required for localization to punctate cytoplasmic foci region. Positions 443–852 (DSLPASITRR…PTAGAQETEA (410 aa)) are necessary and sufficient for interaction with PCNT and localization at the centrosome. The interaction with ATF4 and ATF5 stretch occupies residues 595–852 (GSCFSTAKEL…PTAGAQETEA (258 aa)). Disordered regions lie at residues 706–746 (EAGS…KSPL) and 833–852 (KEAGEASASYPTAGAQETEA). The segment at 728 to 852 (TAALAVPRTP…PTAGAQETEA (125 aa)) is interaction with NDEL1 and PAFAH1B1. The interaction with PAFAH1B1 stretch occupies residues 728 to 852 (TAALAVPRTP…PTAGAQETEA (125 aa)). An interaction with NDEL1 region spans residues 802–835 (SHDEALFQSLQGELQTVKETLQAMILQLQPTKEA).

As to quaternary structure, interacts with NDEL1. Interacts with CCDC88A (via C-terminus); the interaction is direct. Interacts with GSK3B. Interacts with tubulin alpha, ACTN2, ANKHD1, ATF4, ATF5, CEP63, EIF3S3, MAP1A, NDEL1, PAFAH1B1, RANBP9, SPTBN4, SYNE1 and TRAF3IP1. Interaction with microtubules may be mediated in part by TRAF3IP1. Interacts (via C-terminal) with PCNT. Interacts with CHCHD6. Interacts with CCDC141. Interacts with FBXW7, the substrate-recognition component of a SCF (SKP1-CUL1-F-box protein) E3 ubiquitin-protein ligase complex; the interaction targets DISC1 for proteasomal degradation. Interacts with ZNF365. Interacts with ATF4; inhibiting ATF4 transcription factor activity by disrupting ATF4 dimerization and DNA-binding. Interacts with PDE4B. In terms of processing, ubiquitinated. Ubiquitination with 'Lys-48'-linked polyubiquitin chains leads to its proteasomal degradation. As to expression, expressed in granule cell precursors within the dentate migratory stream during the first week of postnatal life and in differentiated granule cells of the hippocampus (at protein level). Detected in heart, brain, kidney, and testis. Expressed in dentate gyrus, hippocampus and in the olfactory bulb.

Its subcellular location is the cytoplasm. The protein localises to the cytoskeleton. The protein resides in the mitochondrion. It localises to the microtubule organizing center. It is found in the centrosome. Its subcellular location is the postsynaptic density. Its function is as follows. Involved in the regulation of multiple aspects of embryonic and adult neurogenesis. Required for neural progenitor proliferation in the ventrical/subventrical zone during embryonic brain development and in the adult dentate gyrus of the hippocampus. Participates in the Wnt-mediated neural progenitor proliferation as a positive regulator by modulating GSK3B activity and CTNNB1 abundance. Plays a role as a modulator of the AKT-mTOR signaling pathway controlling the tempo of the process of newborn neurons integration during adult neurogenesis, including neuron positioning, dendritic development and synapse formation. Inhibits the activation of AKT-mTOR signaling upon interaction with CCDC88A. Regulates the migration of early-born granule cell precursors toward the dentate gyrus during the hippocampal development. Inhibits ATF4 transcription factor activity in neurons by disrupting ATF4 dimerization and DNA-binding. Plays a role, together with PCNT, in the microtubule network formation. This is Disrupted in schizophrenia 1 homolog from Mus musculus (Mouse).